A 326-amino-acid chain; its full sequence is tRNA dimethylallyltransferase (326 aa).

G10 to T17 contributes to the ATP binding site. T12 to T17 contributes to the substrate binding site. Residues D35–Q38 are interaction with substrate tRNA.

It belongs to the IPP transferase family. In terms of assembly, monomer. It depends on Mg(2+) as a cofactor.

The enzyme catalyses adenosine(37) in tRNA + dimethylallyl diphosphate = N(6)-dimethylallyladenosine(37) in tRNA + diphosphate. Functionally, catalyzes the transfer of a dimethylallyl group onto the adenine at position 37 in tRNAs that read codons beginning with uridine, leading to the formation of N6-(dimethylallyl)adenosine (i(6)A). The sequence is that of tRNA dimethylallyltransferase from Dictyoglomus turgidum (strain DSM 6724 / Z-1310).